The chain runs to 208 residues: MGRAHTVSRGEDHPPIARSELPDDTAALARYLIGKLVVRDLPEGMVSGRIVETEAYVVGDAAGHGFRGMTPRNRSLFLERGHAYVYLAYGVSMMLNVSSEVPGIGTGVLIRALEPLDGIEIMRRNRGVERLRDLARGPGRLAAALRIDRSLDGLDLCRKGPLWLAKDNQKPGEIGQSTRIGITKDAARLLRFYVRGSLFVSGPRSLQE.

The disordered stretch occupies residues 1-20; it reads MGRAHTVSRGEDHPPIARSE.

The protein belongs to the DNA glycosylase MPG family.

This is Putative 3-methyladenine DNA glycosylase from Mesorhizobium japonicum (strain LMG 29417 / CECT 9101 / MAFF 303099) (Mesorhizobium loti (strain MAFF 303099)).